The primary structure comprises 132 residues: Small ribosomal subunit protein uS8 (132 aa).

It belongs to the universal ribosomal protein uS8 family. Part of the 30S ribosomal subunit. Contacts proteins S5 and S12.

One of the primary rRNA binding proteins, it binds directly to 16S rRNA central domain where it helps coordinate assembly of the platform of the 30S subunit. In Desulfitobacterium hafniense (strain DSM 10664 / DCB-2), this protein is Small ribosomal subunit protein uS8.